Consider the following 365-residue polypeptide: 3-isopropylmalate dehydrogenase (365 aa).

78-91 (GYKWDSLPRSQRPE) lines the NAD(+) pocket. Positions 98, 108, 136, and 226 each coordinate substrate. Residues D226, D250, and D254 each coordinate Mg(2+). 284–296 (GSAPDIAGQDKAN) contributes to the NAD(+) binding site.

It belongs to the isocitrate and isopropylmalate dehydrogenases family. LeuB type 1 subfamily. As to quaternary structure, homodimer. Requires Mg(2+) as cofactor. The cofactor is Mn(2+).

Its subcellular location is the cytoplasm. The enzyme catalyses (2R,3S)-3-isopropylmalate + NAD(+) = 4-methyl-2-oxopentanoate + CO2 + NADH. The protein operates within amino-acid biosynthesis; L-leucine biosynthesis; L-leucine from 3-methyl-2-oxobutanoate: step 3/4. Functionally, catalyzes the oxidation of 3-carboxy-2-hydroxy-4-methylpentanoate (3-isopropylmalate) to 3-carboxy-4-methyl-2-oxopentanoate. The product decarboxylates to 4-methyl-2 oxopentanoate. The chain is 3-isopropylmalate dehydrogenase from Synechococcus elongatus (strain ATCC 33912 / PCC 7942 / FACHB-805) (Anacystis nidulans R2).